The primary structure comprises 392 residues: Succinate--CoA ligase [ADP-forming] subunit beta (392 aa).

The 240-residue stretch at 9–248 (KGILKQFGVA…ITEEDPLEYE (240 aa)) folds into the ATP-grasp domain. ATP-binding positions include Lys-50, 57 to 59 (GRG), Glu-103, Met-106, and Glu-111. The Mg(2+) site is built by Asn-203 and Asp-217. Residues Asn-268 and 325 to 327 (GIV) contribute to the substrate site.

It belongs to the succinate/malate CoA ligase beta subunit family. As to quaternary structure, heterotetramer of two alpha and two beta subunits. Requires Mg(2+) as cofactor.

It carries out the reaction succinate + ATP + CoA = succinyl-CoA + ADP + phosphate. It catalyses the reaction GTP + succinate + CoA = succinyl-CoA + GDP + phosphate. Its pathway is carbohydrate metabolism; tricarboxylic acid cycle; succinate from succinyl-CoA (ligase route): step 1/1. Succinyl-CoA synthetase functions in the citric acid cycle (TCA), coupling the hydrolysis of succinyl-CoA to the synthesis of either ATP or GTP and thus represents the only step of substrate-level phosphorylation in the TCA. The beta subunit provides nucleotide specificity of the enzyme and binds the substrate succinate, while the binding sites for coenzyme A and phosphate are found in the alpha subunit. The chain is Succinate--CoA ligase [ADP-forming] subunit beta from Chlorobaculum parvum (strain DSM 263 / NCIMB 8327) (Chlorobium vibrioforme subsp. thiosulfatophilum).